Here is a 160-residue protein sequence, read N- to C-terminus: 2-C-methyl-D-erythritol 2,4-cyclodiphosphate synthase (160 aa).

A divalent metal cation contacts are provided by D11 and H13. Residues 11–13 and 37–38 each bind 4-CDP-2-C-methyl-D-erythritol 2-phosphate; these read DIH and HS. Residue H45 participates in a divalent metal cation binding. 4-CDP-2-C-methyl-D-erythritol 2-phosphate contacts are provided by residues 59–61, 135–138, and R145; these read DIG and TTNE.

It belongs to the IspF family. In terms of assembly, homotrimer. The cofactor is a divalent metal cation.

The enzyme catalyses 4-CDP-2-C-methyl-D-erythritol 2-phosphate = 2-C-methyl-D-erythritol 2,4-cyclic diphosphate + CMP. Its pathway is isoprenoid biosynthesis; isopentenyl diphosphate biosynthesis via DXP pathway; isopentenyl diphosphate from 1-deoxy-D-xylulose 5-phosphate: step 4/6. In terms of biological role, involved in the biosynthesis of isopentenyl diphosphate (IPP) and dimethylallyl diphosphate (DMAPP), two major building blocks of isoprenoid compounds. Catalyzes the conversion of 4-diphosphocytidyl-2-C-methyl-D-erythritol 2-phosphate (CDP-ME2P) to 2-C-methyl-D-erythritol 2,4-cyclodiphosphate (ME-CPP) with a corresponding release of cytidine 5-monophosphate (CMP). The protein is 2-C-methyl-D-erythritol 2,4-cyclodiphosphate synthase of Synechococcus elongatus (strain ATCC 33912 / PCC 7942 / FACHB-805) (Anacystis nidulans R2).